The primary structure comprises 319 residues: Protein-methionine-sulfoxide reductase catalytic subunit MsrP (319 aa).

A signal peptide (tat-type signal) is located at residues Met-1 to Ala-40. Residues Asn-73, Tyr-76–Glu-77, Cys-131, Thr-166, Asn-218, Arg-223, and Asn-234–Lys-236 each bind Mo-molybdopterin.

Belongs to the MsrP family. In terms of assembly, heterodimer of a catalytic subunit (MsrP) and a heme-binding subunit (MsrQ). It depends on Mo-molybdopterin as a cofactor. In terms of processing, predicted to be exported by the Tat system. The position of the signal peptide cleavage has not been experimentally proven.

It localises to the periplasm. It catalyses the reaction L-methionyl-[protein] + a quinone + H2O = L-methionyl-(S)-S-oxide-[protein] + a quinol. The enzyme catalyses L-methionyl-[protein] + a quinone + H2O = L-methionyl-(R)-S-oxide-[protein] + a quinol. In terms of biological role, part of the MsrPQ system that repairs oxidized periplasmic proteins containing methionine sulfoxide residues (Met-O), using respiratory chain electrons. Thus protects these proteins from oxidative-stress damage caused by reactive species of oxygen and chlorine generated by the host defense mechanisms. MsrPQ is essential for the maintenance of envelope integrity under bleach stress, rescuing a wide series of structurally unrelated periplasmic proteins from methionine oxidation. The catalytic subunit MsrP is non-stereospecific, being able to reduce both (R-) and (S-) diastereoisomers of methionine sulfoxide. This chain is Protein-methionine-sulfoxide reductase catalytic subunit MsrP, found in Pasteurella multocida (strain Pm70).